The primary structure comprises 469 residues: Sulfate adenylyltransferase subunit 1 (469 aa).

Residues 22 to 237 (KEVLRFITCG…LEEVPVKSEE (216 aa)) enclose the tr-type G domain. The G1 stretch occupies residues 31 to 38 (GSVDDGKS). 31–38 (GSVDDGKS) lines the GTP pocket. The tract at residues 89 to 93 (GITID) is G2. The tract at residues 110–113 (DTPG) is G3. GTP-binding positions include 110-114 (DTPGH) and 165-168 (NKMD). The tract at residues 165-168 (NKMD) is G4. A G5 region spans residues 202 to 204 (SAK).

The protein belongs to the TRAFAC class translation factor GTPase superfamily. Classic translation factor GTPase family. CysN/NodQ subfamily. In terms of assembly, heterodimer composed of CysD, the smaller subunit, and CysN.

It catalyses the reaction sulfate + ATP + H(+) = adenosine 5'-phosphosulfate + diphosphate. The protein operates within sulfur metabolism; hydrogen sulfide biosynthesis; sulfite from sulfate: step 1/3. With CysD forms the ATP sulfurylase (ATPS) that catalyzes the adenylation of sulfate producing adenosine 5'-phosphosulfate (APS) and diphosphate, the first enzymatic step in sulfur assimilation pathway. APS synthesis involves the formation of a high-energy phosphoric-sulfuric acid anhydride bond driven by GTP hydrolysis by CysN coupled to ATP hydrolysis by CysD. In Methylorubrum extorquens (strain CM4 / NCIMB 13688) (Methylobacterium extorquens), this protein is Sulfate adenylyltransferase subunit 1.